The following is a 258-amino-acid chain: Proliferating cell nuclear antigen (258 aa).

Residues 61 to 80 (RCDHPVTLGMDLTSLSKILR) mediate DNA binding. Lys127 is covalently cross-linked (Glycyl lysine isopeptide (Lys-Gly) (interchain with G-Cter in SUMO)). Lys164 is covalently cross-linked (Glycyl lysine isopeptide (Lys-Gly) (interchain with G-Cter in SUMO); alternate). A Glycyl lysine isopeptide (Lys-Gly) (interchain with G-Cter in ubiquitin); alternate cross-link involves residue Lys164.

Belongs to the PCNA family. Homotrimer. Interacts with RAD30. Interacts with MCM10. Interacts with UBP10. Sumoylated on Lys-164, and to a lesser extent on Lys-127 by the UBC9/SIZ1 complex during S-phase; which impairs ubiquitination and function in DNA repair. Post-translationally, monoubiquitinated on Lys-164 by the UBC2/RAD18 complex upon DNA damage, and then polyubiquitinated through 'Lys-63'-linkage by UBC13/MMS2. Ubiquitination is required for UBC2-mediated DNA repair. In terms of processing, lys-164 is deubiquitinated by UBP10.

Its subcellular location is the nucleus. This protein is an auxiliary protein of DNA polymerase delta and is involved in the control of eukaryotic DNA replication by increasing the polymerase's processibility during elongation of the leading strand. Involved in DNA repair. The sequence is that of Proliferating cell nuclear antigen (POL30) from Saccharomyces cerevisiae (strain ATCC 204508 / S288c) (Baker's yeast).